The following is a 224-amino-acid chain: Ribose-5-phosphate isomerase A (224 aa).

Substrate-binding positions include 26 to 29, 82 to 85, and 95 to 98; these read TGST, DGAD, and KGGG. Catalysis depends on Glu-104, which acts as the Proton acceptor. Residue Lys-122 participates in substrate binding.

It belongs to the ribose 5-phosphate isomerase family. As to quaternary structure, homodimer.

It carries out the reaction aldehydo-D-ribose 5-phosphate = D-ribulose 5-phosphate. It participates in carbohydrate degradation; pentose phosphate pathway; D-ribose 5-phosphate from D-ribulose 5-phosphate (non-oxidative stage): step 1/1. Its function is as follows. Catalyzes the reversible conversion of ribose-5-phosphate to ribulose 5-phosphate. The sequence is that of Ribose-5-phosphate isomerase A from Lactococcus lactis subsp. cremoris (strain SK11).